The primary structure comprises 1842 residues: Fatty acid synthase alpha subunit pigJ (1842 aa).

Residues Gly120 to Asp184 are disordered. Positions Ser140–Thr175 are enriched in low complexity. The region spanning Asp184–Lys262 is the Carrier domain. Ser222 is subject to O-(pantetheine 4'-phosphoryl)serine. A beta-ketoacyl reductase region spans residues Gly611–Gly807. A Ketosynthase family 3 (KS3) domain is found at Lys1058–Ala1585. Residues Cys1244, His1470, and His1511 each act as for beta-ketoacyl synthase activity in the active site. Positions Lys1649 to Thr1672 are disordered. Residues Asn1658–Ser1668 are compositionally biased toward low complexity. Mg(2+) contacts are provided by Asp1725, Val1726, and Glu1727. Acetyl-CoA is bound by residues Asp1725–Glu1727, Ser1761, Glu1770–Ser1780, and Ile1823–His1825. Residues Thr1824 and His1825 each coordinate Mg(2+).

Belongs to the thiolase-like superfamily. Fungal fatty acid synthetase subunit alpha family. [Alpha(6)beta(6)] hexamers of two multifunctional subunits (alpha and beta).

The enzyme catalyses acetyl-CoA + n malonyl-CoA + 2n NADPH + 4n H(+) = a long-chain-acyl-CoA + n CoA + n CO2 + 2n NADP(+).. It carries out the reaction a fatty acyl-[ACP] + malonyl-[ACP] + H(+) = a 3-oxoacyl-[ACP] + holo-[ACP] + CO2. It catalyses the reaction a (3R)-hydroxyacyl-[ACP] + NADP(+) = a 3-oxoacyl-[ACP] + NADPH + H(+). It functions in the pathway secondary metabolite biosynthesis. Functionally, fatty acid synthase alpha subunit; part of the gene cluster that mediates the biosynthesis of azaphilone pigments (MonAzPs), a complex mixture of compounds with a common azaphilone skeleton very widely used as food colorants. PigJ and pigK form the two subunits of a dedicated fungal fatty acid synthase (FAS) that produces the side chain fatty acyl moiety of MonAzPs, a beta-keto fatty acid. The chain length control of the pigJ-pigK FAS is somewhat flexible as MonAzPs features either a beta-ketooctanoic or a beta-ketodecanoic acid moiety. The beta-ketoacyl-ACP probably serves as the substrate for the acetyltransferase pigD that directly transfers the fatty acyl chain to the C-4 alcohol of the pyran ring. The first step of the pathway is performed by the nrPKS pigA that forms the hexaketide precursor from successive condensations of five malonyl-CoA units, with a simple acetyl-CoA starter unit. The role of esterase pigG is not clear, but it may play at most a supplementary role in the formation of the benzaldehyde produced by the pigA nrPKS. This very reactive benzaldehyde is intercepted by the pigC ketoreductase that to provide the first stable enzyme-free MonAzPs intermediate, 6-(4-hydroxy-2-oxopentyl)-3-methyl-2,4-dioxocyclohexane carbaldehyde, also known as M7PKS-1. The FAD-dependent monooxygenase pigN hydroxylates M7PKS-1 at C-4, which triggers the formation of the pyran ring. PigJ, pigK and pigD are involved in the acetylation of the pyran ring. PigJ and pigK form the two subunits of a dedicated fungal FAS that produces the side chain fatty acyl moiety of MonAzPs and pigD transfers the fatty acyl chain to the C-4 alcohol. PigM and pigO are involved in the elimination of the omega-1 alcohol. PigM acts as an O-acetyltransferase that synthesizes the putative O-11 acetyl intermediate whereas pigO eliminates acetic acid to yield an intermediate with a C10(11) double bond. The dehydration of the C-11 alcohol followed by the reduction of the C6(7) double bond by the NAD(P)H-dependent oxidoreductase pigE increases the electrophilicity of the C-5 ketone of the resulting acyl benzopyran. This in turn sets up the C-5 ketone for an intramolecular Knoevenagel aldol condensation with the C-20 enol of the side chain. This condensation affords the characteristic linear tricyclic carbon skeletons of the yellow pigments that serve as the common precursors for the classical yellow pigments monascin and ankaflavin, orange pigments rubopunctatin and monascorubrin, and red pigments ribropunctamine and monascorubramine. The FAD-dependent oxidoreductase pigF is especially invoved in the biosynthesis of orange and red pigments via desaturation of C6(7). This Monascus ruber (Mold) protein is Fatty acid synthase alpha subunit pigJ.